Consider the following 110-residue polypeptide: Phosphoribosyl-AMP cyclohydrolase (110 aa).

Asp80 lines the Mg(2+) pocket. Zn(2+) is bound at residue Cys81. Positions 82 and 84 each coordinate Mg(2+). Residues Cys97 and Cys104 each contribute to the Zn(2+) site.

This sequence belongs to the PRA-CH family. Homodimer. It depends on Mg(2+) as a cofactor. Requires Zn(2+) as cofactor.

The protein localises to the cytoplasm. The catalysed reaction is 1-(5-phospho-beta-D-ribosyl)-5'-AMP + H2O = 1-(5-phospho-beta-D-ribosyl)-5-[(5-phospho-beta-D-ribosylamino)methylideneamino]imidazole-4-carboxamide. It functions in the pathway amino-acid biosynthesis; L-histidine biosynthesis; L-histidine from 5-phospho-alpha-D-ribose 1-diphosphate: step 3/9. Catalyzes the hydrolysis of the adenine ring of phosphoribosyl-AMP. The polypeptide is Phosphoribosyl-AMP cyclohydrolase (Clostridium botulinum (strain Kyoto / Type A2)).